The following is a 426-amino-acid chain: Adenylosuccinate synthetase (426 aa).

GTP contacts are provided by residues 18-24 and 46-48; these read GDEGKGK and GHT. Catalysis depends on Asp19, which acts as the Proton acceptor. The Mg(2+) site is built by Asp19 and Gly46. Residues 19 to 22, 44 to 47, Thr136, Arg150, Gln222, Thr237, and Arg301 contribute to the IMP site; these read DEGK and NAGH. His47 functions as the Proton donor in the catalytic mechanism. 297 to 303 lines the substrate pocket; that stretch reads VTTKRKR. Residues Arg303, 329-331, and 413-415 contribute to the GTP site; these read KID and GTG.

Belongs to the adenylosuccinate synthetase family. In terms of assembly, homodimer. The cofactor is Mg(2+).

The protein localises to the cytoplasm. The enzyme catalyses IMP + L-aspartate + GTP = N(6)-(1,2-dicarboxyethyl)-AMP + GDP + phosphate + 2 H(+). It participates in purine metabolism; AMP biosynthesis via de novo pathway; AMP from IMP: step 1/2. Its function is as follows. Plays an important role in the de novo pathway and in the salvage pathway of purine nucleotide biosynthesis. Catalyzes the first committed step in the biosynthesis of AMP from IMP. The protein is Adenylosuccinate synthetase of Schistosoma mansoni (Blood fluke).